Here is a 140-residue protein sequence, read N- to C-terminus: ATP synthase epsilon chain (140 aa).

This sequence belongs to the ATPase epsilon chain family. In terms of assembly, F-type ATPases have 2 components, CF(1) - the catalytic core - and CF(0) - the membrane proton channel. CF(1) has five subunits: alpha(3), beta(3), gamma(1), delta(1), epsilon(1). CF(0) has three main subunits: a, b and c.

Its subcellular location is the cell inner membrane. Produces ATP from ADP in the presence of a proton gradient across the membrane. The chain is ATP synthase epsilon chain from Yersinia pseudotuberculosis serotype O:1b (strain IP 31758).